Here is a 136-residue protein sequence, read N- to C-terminus: Small ribosomal subunit protein uS9 (136 aa).

Residues 115–136 are disordered; it reads KVKERKKPGLRKARKARQFSKR. Positions 117 to 136 are enriched in basic residues; the sequence is KERKKPGLRKARKARQFSKR.

Belongs to the universal ribosomal protein uS9 family.

The polypeptide is Small ribosomal subunit protein uS9 (Mycoplasmopsis pulmonis (strain UAB CTIP) (Mycoplasma pulmonis)).